The chain runs to 686 residues: Protein arginine N-methyltransferase 7 (686 aa).

SAM-dependent MTase PRMT-type domains lie at 5–352 (SDDY…FSWW) and 357–686 (DLSL…FKFD).

Belongs to the class I-like SAM-binding methyltransferase superfamily. Protein arginine N-methyltransferase family. PRMT7 subfamily.

Its function is as follows. Essential arginine methyltransferase that can both catalyze the formation of omega-N monomethylarginine (MMA) and symmetrical dimethylarginine (sDMA). Specifically mediates the symmetrical dimethylation of arginine residues in the small nuclear ribonucleoproteins SmD1 and SmD3. This Aedes aegypti (Yellowfever mosquito) protein is Protein arginine N-methyltransferase 7 (Art7).